Reading from the N-terminus, the 141-residue chain is HTH-type transcriptional repressor NsrR (141 aa).

In terms of domain architecture, HTH rrf2-type spans 2-129; that stretch reads QLTSFTDYGL…DNYTLADLVE (128 aa). The segment at residues 28-51 is a DNA-binding region (H-T-H motif); it reads ISEVTEVYGVSRNHMVKIINQLSR. Residues Cys91, Cys96, and Cys102 each coordinate [2Fe-2S] cluster.

The cofactor is [2Fe-2S] cluster.

Nitric oxide-sensitive repressor of genes involved in protecting the cell against nitrosative stress. May require iron for activity. This chain is HTH-type transcriptional repressor NsrR, found in Klebsiella pneumoniae subsp. pneumoniae (strain ATCC 700721 / MGH 78578).